The sequence spans 397 residues: 4-hydroxybenzoate polyprenyltransferase, mitochondrial (397 aa).

A mitochondrion-targeting transit peptide spans 1 to 14 (MFAVRHLLKSRKHF). Transmembrane regions (helical) follow at residues 96–116 (IGTY…ADAG), 121–141 (LTML…GCTI), 169–189 (FDAI…LVQL), 190–210 (NWQS…YPLM), 213–233 (VTYW…LLGW), 242–262 (LAAC…YDTI), 289–309 (VWLS…GWAC), 313–333 (LPYY…IYSL), and 345–365 (FLSN…GTLL).

Belongs to the UbiA prenyltransferase family. Mg(2+) serves as cofactor.

It localises to the mitochondrion inner membrane. The catalysed reaction is an all-trans-polyprenyl diphosphate + 4-hydroxybenzoate = a 4-hydroxy-3-(all-trans-polyprenyl)benzoate + diphosphate. It participates in cofactor biosynthesis; ubiquinone biosynthesis. In terms of biological role, catalyzes the prenylation of para-hydroxybenzoate (PHB) with an all-trans polyprenyl group. Mediates the second step in the final reaction sequence of coenzyme Q (CoQ) biosynthesis, which is the condensation of the polyisoprenoid side chain with PHB, generating the first membrane-bound Q intermediate. The protein is 4-hydroxybenzoate polyprenyltransferase, mitochondrial of Drosophila pseudoobscura pseudoobscura (Fruit fly).